An 863-amino-acid polypeptide reads, in one-letter code: Autotaxin (863 aa).

Residues 1–27 form the signal peptide; the sequence is MARRSSFQSCQIISLFTFAVGVNICLG. A propeptide spans 28 to 35 (removed by furin); the sequence is FTAHRIKR. Residue Asn-54 is glycosylated (N-linked (GlcNAc...) asparagine). 2 consecutive SMB domains span residues 55-98 and 99-143; these read ISGS…LKTA and RGWE…GESH. 10 cysteine pairs are disulfide-bonded: Cys-59-Cys-76, Cys-63-Cys-94, Cys-74-Cys-87, Cys-80-Cys-86, Cys-103-Cys-120, Cys-108-Cys-138, Cys-118-Cys-131, Cys-124-Cys-130, Cys-149-Cys-195, and Cys-157-Cys-351. The Cell attachment site motif lies at 127–129; the sequence is RGD. Residues 145 to 502 are phosphodiesterase; sequence VDDDCEEIKA…STFKYKTKVP (358 aa). Residues Asp-172 and Thr-210 each contribute to the Zn(2+) site. Thr-210 (nucleophile) is an active-site residue. Residues Thr-210, Asn-231, and Asp-312 each coordinate 1-(9Z-octadecenoyl)-sn-glycero-3-phosphate. 3 residues coordinate 1-hexadecanoyl-sn-glycero-3-phosphate: Thr-210, Asn-231, and Asp-312. 1-tetradecanoyl-sn-glycerol 3-phosphate contacts are provided by Thr-210, Asn-231, and Asp-312. Asp-312, His-316, Asp-359, and His-360 together coordinate Zn(2+). 5 disulfides stabilise this stretch: Cys-367-Cys-469, Cys-414-Cys-806, Cys-567-Cys-667, Cys-569-Cys-652, and Cys-775-Cys-785. N-linked (GlcNAc...) asparagine glycosylation occurs at Asn-411. Position 475 (His-475) interacts with Zn(2+). Residue His-475 coordinates 1-(9Z-octadecenoyl)-sn-glycero-3-phosphate. His-475 contributes to the 1-hexadecanoyl-sn-glycero-3-phosphate binding site. 1-tetradecanoyl-sn-glycerol 3-phosphate is bound at residue His-475. Asn-525 carries N-linked (GlcNAc...) asparagine glycosylation. The nuclease-like domain stretch occupies residues 598–863; sequence LYGRPAVLYR…TYLHTYESEI (266 aa). Residues Asp-740, Asp-742, Asp-744, Leu-746, and Asp-748 each coordinate Ca(2+). N-linked (GlcNAc...) asparagine glycosylation is present at Asn-807. Residues 830–851 form a required for secretion region; that stretch reads IEHLTSLDFFRKTSRSYPEILT.

The protein belongs to the nucleotide pyrophosphatase/phosphodiesterase family. Zn(2+) is required as a cofactor. Requires Ca(2+) as cofactor. N-glycosylation, but not furin-cleavage, plays a critical role on secretion and on lysoPLD activity. In terms of processing, the interdomain disulfide bond between Cys-414 and Cys-806 is essential for catalytic activity. As to expression, detected in blood plasma (at protein level). Predominantly expressed in brain, placenta, ovary, and small intestine. Expressed in a number of carcinomas such as hepatocellular and prostate carcinoma, neuroblastoma and non-small-cell lung cancer. Expressed in body fluids such as plasma, cerebral spinal fluid (CSF), saliva, follicular and amniotic fluids. Not detected in leukocytes. Isoform 1 is more highly expressed in peripheral tissues than in the central nervous system (CNS). Adipocytes only express isoform 1. Isoform 3 is more highly expressed in the brain than in peripheral tissues.

Its subcellular location is the secreted. The enzyme catalyses a 1-O-alkyl-sn-glycero-3-phosphoethanolamine + H2O = a 1-O-alkyl-sn-glycero-3-phosphate + ethanolamine + H(+). It carries out the reaction a 1-acyl-sn-glycero-3-phosphoethanolamine + H2O = a 1-acyl-sn-glycero-3-phosphate + ethanolamine + H(+). The catalysed reaction is 1-(9Z-octadecenoyl)-sn-glycero-3-phosphoethanolamine + H2O = 1-(9Z-octadecenoyl)-sn-glycero-3-phosphate + ethanolamine + H(+). It catalyses the reaction a 1-O-alkyl-sn-glycero-3-phosphocholine + H2O = a 1-O-alkyl-sn-glycero-3-phosphate + choline + H(+). The enzyme catalyses 1-O-(9Z-octadecenyl)-sn-glycero-3-phosphocholine + H2O = 1-O-(9Z-octadecenyl)-sn-glycero-3-phosphate + choline + H(+). It carries out the reaction 1-O-hexadecyl-sn-glycero-3-phosphocholine + H2O = 1-O-hexadecyl-sn-glycero-3-phosphate + choline + H(+). The catalysed reaction is a 1-O-(1Z-alkenyl)-sn-glycero-3-phosphocholine + H2O = a 1-O-(1Z-alkenyl)-sn-glycero-3-phosphate + choline + H(+). It catalyses the reaction a 1-acyl-sn-glycero-3-phosphocholine + H2O = a 1-acyl-sn-glycero-3-phosphate + choline + H(+). The enzyme catalyses 1-dodecanoyl-sn-glycero-3-phosphocholine + H2O = 1-dodecanoyl-sn-glycerol 3-phosphate + choline + H(+). It carries out the reaction 1-(9Z-octadecenoyl)-sn-glycero-3-phosphocholine + H2O = 1-(9Z-octadecenoyl)-sn-glycero-3-phosphate + choline + H(+). The catalysed reaction is 1-tetradecanoyl-sn-glycero-3-phosphocholine + H2O = 1-tetradecanoyl-sn-glycerol 3-phosphate + choline + H(+). It catalyses the reaction 1-decanoyl-sn-glycero-3-phosphocholine + H2O = 1-decanoyl-sn-glycero-3-phosphate + choline + H(+). The enzyme catalyses 1-octadecanoyl-sn-glycero-3-phosphocholine + H2O = 1-octadecanoyl-sn-glycero-3-phosphate + choline + H(+). It carries out the reaction 1-hexadecanoyl-sn-glycero-3-phosphocholine + H2O = 1-hexadecanoyl-sn-glycero-3-phosphate + choline + H(+). The catalysed reaction is 1-hexanoyl-sn-glycero-3-phosphocholine + H2O = 1-hexanoyl-sn-glycero-3-phosphate + choline + H(+). It catalyses the reaction 1-(9Z,12Z)-octadecadienoyl-sn-glycero-3-phosphocholine + H2O = 1-(9Z,12Z)-octadecadienoyl-sn-glycero-3-phosphate + choline + H(+). The enzyme catalyses sphing-4-enine-phosphocholine + H2O = sphing-4-enine 1-phosphate + choline + H(+). It carries out the reaction 1-(5Z,8Z,11Z,14Z-eicosatetraenoyl)-sn-glycero-3-phosphocholine + H2O = 1-(5Z,8Z,11Z,14Z-eicosatetraenoyl)-sn-glycero-3-phosphate + choline + H(+). The catalysed reaction is a 2-acyl-sn-glycero-3-phosphocholine + H2O = a 2-acyl-sn-glycerol 3-phosphate + choline + H(+). It catalyses the reaction a 1,2-diacyl-sn-glycero-3-phosphocholine + H2O = a 1,2-diacyl-sn-glycero-3-phosphate + choline + H(+). The enzyme catalyses 1,2-dioctanoyl-sn-glycero-3-phosphocholine + H2O = 1,2-dioctanoyl-sn-glycero-3-phosphate + choline + H(+). It carries out the reaction 1,2-didecanoyl-sn-glycero-3-phosphocholine + H2O = 1,2-didecanoyl-sn-glycero-3-phosphate + choline + H(+). The catalysed reaction is a 1-acyl-sn-glycero-3-phospho-L-serine + H2O = a 1-acyl-sn-glycero-3-phosphate + L-serine + H(+). It catalyses the reaction 1-(9Z-octadecenoyl)-sn-glycero-3-phospho-L-serine + H2O = 1-(9Z-octadecenoyl)-sn-glycero-3-phosphate + L-serine + H(+). The enzyme catalyses a 2-acyl-sn-glycero-3-phospho-L-serine + H2O = a 2-acyl-sn-glycerol 3-phosphate + L-serine + H(+). With respect to regulation, inhibited by lysophosphatidic acid (LPA) and sphingosine-1-phosphate (S1P). Inhibited by EDTA and EGTA. Its function is as follows. Secreted lysophospholipase D that hydrolyzes lysophospholipids to produce the signaling molecule lysophosphatidic acid (LPA) in extracellular fluids. Its major substrate is lysophosphatidylcholine. Can also act on sphingosylphosphorylcholine producing sphingosine-1-phosphate, a modulator of cell motility. Can hydrolyze, in vitro, bis-pNPP, to some extent pNP-TMP, and barely ATP. Involved in several motility-related processes such as angiogenesis and neurite outgrowth. Acts as an angiogenic factor by stimulating migration of smooth muscle cells and microtubule formation. Stimulates migration of melanoma cells, probably via a pertussis toxin-sensitive G protein. May have a role in induction of parturition. Possible involvement in cell proliferation and adipose tissue development. Required for LPA production in activated platelets, cleaves the sn-1 lysophospholipids to generate sn-1 lysophosphatidic acids containing predominantly 18:2 and 20:4 fatty acids. Shows a preference for the sn-1 to the sn-2 isomer of 1-O-alkyl-sn-glycero-3-phosphocholine (lyso-PAF). The polypeptide is Autotaxin (Homo sapiens (Human)).